Consider the following 345-residue polypeptide: Phosphoribosylformylglycinamidine cyclo-ligase (345 aa).

It belongs to the AIR synthase family.

It is found in the cytoplasm. The enzyme catalyses 2-formamido-N(1)-(5-O-phospho-beta-D-ribosyl)acetamidine + ATP = 5-amino-1-(5-phospho-beta-D-ribosyl)imidazole + ADP + phosphate + H(+). The protein operates within purine metabolism; IMP biosynthesis via de novo pathway; 5-amino-1-(5-phospho-D-ribosyl)imidazole from N(2)-formyl-N(1)-(5-phospho-D-ribosyl)glycinamide: step 2/2. This chain is Phosphoribosylformylglycinamidine cyclo-ligase, found in Lactobacillus acidophilus (strain ATCC 700396 / NCK56 / N2 / NCFM).